Consider the following 447-residue polypeptide: N-succinylarginine dihydrolase (447 aa).

Substrate is bound by residues 19–28 (AGLSFGNEAS), Asn-110, and 137–138 (HR). Glu-174 is an active-site residue. Arg-214 is a substrate binding site. Residue His-250 is part of the active site. Substrate contacts are provided by Asp-252 and Asn-365. The active-site Nucleophile is Cys-371.

It belongs to the succinylarginine dihydrolase family. Homodimer.

It catalyses the reaction N(2)-succinyl-L-arginine + 2 H2O + 2 H(+) = N(2)-succinyl-L-ornithine + 2 NH4(+) + CO2. The protein operates within amino-acid degradation; L-arginine degradation via AST pathway; L-glutamate and succinate from L-arginine: step 2/5. Functionally, catalyzes the hydrolysis of N(2)-succinylarginine into N(2)-succinylornithine, ammonia and CO(2). In Acinetobacter baumannii (strain ACICU), this protein is N-succinylarginine dihydrolase.